The following is a 280-amino-acid chain: Putative pyruvate, phosphate dikinase regulatory protein (280 aa).

An ADP-binding site is contributed by 152–159 (GVSRTSKS).

Belongs to the pyruvate, phosphate/water dikinase regulatory protein family. PDRP subfamily.

The catalysed reaction is N(tele)-phospho-L-histidyl/L-threonyl-[pyruvate, phosphate dikinase] + ADP = N(tele)-phospho-L-histidyl/O-phospho-L-threonyl-[pyruvate, phosphate dikinase] + AMP + H(+). It carries out the reaction N(tele)-phospho-L-histidyl/O-phospho-L-threonyl-[pyruvate, phosphate dikinase] + phosphate + H(+) = N(tele)-phospho-L-histidyl/L-threonyl-[pyruvate, phosphate dikinase] + diphosphate. Its function is as follows. Bifunctional serine/threonine kinase and phosphorylase involved in the regulation of the pyruvate, phosphate dikinase (PPDK) by catalyzing its phosphorylation/dephosphorylation. The protein is Putative pyruvate, phosphate dikinase regulatory protein of Anaplasma phagocytophilum (strain HZ).